The following is a 262-amino-acid chain: Octanoyltransferase (262 aa).

The 189-residue stretch at 60–248 (GTADELVWLV…AFEMVFGPTR (189 aa)) folds into the BPL/LPL catalytic domain. Residues 99 to 106 (RGGEYTYH), 179 to 181 (AIG), and 192 to 194 (GLS) contribute to the substrate site. Cys-210 acts as the Acyl-thioester intermediate in catalysis.

This sequence belongs to the LipB family.

It is found in the cytoplasm. It carries out the reaction octanoyl-[ACP] + L-lysyl-[protein] = N(6)-octanoyl-L-lysyl-[protein] + holo-[ACP] + H(+). It functions in the pathway protein modification; protein lipoylation via endogenous pathway; protein N(6)-(lipoyl)lysine from octanoyl-[acyl-carrier-protein]: step 1/2. In terms of biological role, catalyzes the transfer of endogenously produced octanoic acid from octanoyl-acyl-carrier-protein onto the lipoyl domains of lipoate-dependent enzymes. Lipoyl-ACP can also act as a substrate although octanoyl-ACP is likely to be the physiological substrate. This is Octanoyltransferase from Sinorhizobium medicae (strain WSM419) (Ensifer medicae).